The following is a 404-amino-acid chain: Cysteine desulfurase IscS (404 aa).

Residues 75-76, N155, Q183, and 203-205 each bind pyridoxal 5'-phosphate; these read AT and SAH. An N6-(pyridoxal phosphate)lysine modification is found at K206. T243 is a binding site for pyridoxal 5'-phosphate. The active-site Cysteine persulfide intermediate is C328. Residue C328 participates in [2Fe-2S] cluster binding.

Belongs to the class-V pyridoxal-phosphate-dependent aminotransferase family. NifS/IscS subfamily. As to quaternary structure, homodimer. Forms a heterotetramer with IscU, interacts with other sulfur acceptors. Pyridoxal 5'-phosphate is required as a cofactor.

The protein localises to the cytoplasm. The enzyme catalyses (sulfur carrier)-H + L-cysteine = (sulfur carrier)-SH + L-alanine. The protein operates within cofactor biosynthesis; iron-sulfur cluster biosynthesis. In terms of biological role, master enzyme that delivers sulfur to a number of partners involved in Fe-S cluster assembly, tRNA modification or cofactor biosynthesis. Catalyzes the removal of elemental sulfur atoms from cysteine to produce alanine. Functions as a sulfur delivery protein for Fe-S cluster synthesis onto IscU, an Fe-S scaffold assembly protein, as well as other S acceptor proteins. The protein is Cysteine desulfurase IscS of Azotobacter vinelandii (strain DJ / ATCC BAA-1303).